We begin with the raw amino-acid sequence, 485 residues long: Glutamate--tRNA ligase 1 (485 aa).

Residues 10 to 20 carry the 'HIGH' region motif; the sequence is PSPTGAIHIGN. The 'KMSKS' region signature appears at 252–256; the sequence is KLSKR. K255 contacts ATP.

This sequence belongs to the class-I aminoacyl-tRNA synthetase family. Glutamate--tRNA ligase type 1 subfamily. Monomer.

Its subcellular location is the cytoplasm. It carries out the reaction tRNA(Glu) + L-glutamate + ATP = L-glutamyl-tRNA(Glu) + AMP + diphosphate. Catalyzes the attachment of glutamate to tRNA(Glu) in a two-step reaction: glutamate is first activated by ATP to form Glu-AMP and then transferred to the acceptor end of tRNA(Glu). In Thermoanaerobacter pseudethanolicus (strain ATCC 33223 / 39E) (Clostridium thermohydrosulfuricum), this protein is Glutamate--tRNA ligase 1.